Here is a 599-residue protein sequence, read N- to C-terminus: Adenine deaminase (599 aa).

It belongs to the metallo-dependent hydrolases superfamily. Adenine deaminase family. The cofactor is Mn(2+).

The enzyme catalyses adenine + H2O + H(+) = hypoxanthine + NH4(+). The polypeptide is Adenine deaminase (Clostridium botulinum (strain 657 / Type Ba4)).